The sequence spans 1169 residues: Polyamine-transporting ATPase 13A2 (1169 aa).

At 1-44 (MSADSSLLMGSTPPSYGTLTTGTSIDPLSSSASSVRLSGYCGSP) the chain is on the cytoplasmic side. The stretch at 45–65 (WRAIGYHAAVWMLAGIPWLLF) is an intramembrane region. At 66 to 225 (RWKPLWGVRL…ISIPVKSYLQ (160 aa)) the chain is on the cytoplasmic side. Residues 226–246 (LLADEALNPYYGFQAFSIALW) traverse the membrane as a helical segment. At 247 to 250 (LADH) the chain is on the lumenal side. The chain crosses the membrane as a helical span at residues 251 to 271 (YYWYALCIFLISAISICLALY). Topologically, residues 272–422 (KTRKQSLTLR…SFKFYKHSMK (151 aa)) are cytoplasmic. The helical transmembrane segment at 423–443 (FVAALSVLALLGTVYSIIILY) threads the bilayer. The Lumenal portion of the chain corresponds to 444–458 (RNRVPVREIVIRALD). Residues 459–479 (LVTVVVPPALPAAMTVCTLYA) traverse the membrane as a helical segment. Residues 480 to 919 (QSRLRTQGIF…REGRCSLDTS (440 aa)) lie on the Cytoplasmic side of the membrane. The active-site 4-aspartylphosphate intermediate is Asp508. Asp867 and Asp871 together coordinate Mg(2+). Residues 920–940 (FSVFKYMALYSLTQFISVLIL) traverse the membrane as a helical segment. Over 941-946 (YTINTN) the chain is Lumenal. The chain crosses the membrane as a helical span at residues 947-967 (LGDLQFLAIDLVITTTVAVLM). Over 968–993 (SRTGPALTLVRARPPGALLSVPVLGS) the chain is Cytoplasmic. Residues 994-1014 (LLLQVALVAGIQLGGYFLVIA) form a helical membrane-spanning segment. Topologically, residues 1015–1037 (QPWFVPLNRTVPAPDNLPNYENT) are lumenal. Residue Asn1022 is glycosylated (N-linked (GlcNAc...) asparagine). The helical transmembrane segment at 1038-1058 (VVFSLSGFQYLILAAAVSKGA) threads the bilayer. Residues 1059–1069 (PFRQPLYTNVP) lie on the Cytoplasmic side of the membrane. The chain crosses the membrane as a helical span at residues 1070–1090 (FLVALALLGSVLVGLILVPGL). Residues 1091–1106 (LQGPLGLRNIVDSSFK) are Lumenal-facing. Residues 1107–1127 (LLLLGLVAFNFVGAFMLESVL) form a helical membrane-spanning segment. Over 1128–1169 (DQCLPACLRWLRPKRASKKQFKRLQQELAEHPWPTLPVGSVR) the chain is Cytoplasmic.

Belongs to the cation transport ATPase (P-type) (TC 3.A.3) family. Type V subfamily. Interacts with MYCBP2; the interaction inhibits the ubiquitination of TSC2 by MYCBP2. Interacts with HDAC6; the interaction results in recruitment of HDAC6 to lysosomes to promote CTTN deacetylation. In terms of processing, autophosphorylated. Accumulates in an inactive autophosphorylated state and autophosphorylation is stimulated by phosphatidic acid and phosphatidylinositol 3,5-bisphosphate but not by Mn(2+) or Zn(2+). The presence of spermine results in a dose-dependent reduction in autophosphorylation.

It is found in the lysosome membrane. Its subcellular location is the late endosome membrane. It localises to the endosome. The protein localises to the multivesicular body membrane. The protein resides in the cytoplasmic vesicle. It is found in the autophagosome membrane. It catalyses the reaction spermidine(out) + ATP + H2O = spermidine(in) + ADP + phosphate + H(+). It carries out the reaction spermine(out) + ATP + H2O = spermine(in) + ADP + phosphate + H(+). Accumulates in an inactive autophosphorylated state. The presence of spermine results in a dose-dependent reduction in autophosphorylation. Functionally, ATPase which acts as a lysosomal polyamine exporter with high affinity for spermine. Also stimulates cellular uptake of polyamines and protects against polyamine toxicity. Plays a role in intracellular cation homeostasis and the maintenance of neuronal integrity. Contributes to cellular zinc homeostasis. Confers cellular protection against Mn(2+) and Zn(2+) toxicity and mitochondrial stress. Required for proper lysosomal and mitochondrial maintenance. Regulates the autophagy-lysosome pathway through the control of SYT11 expression at both transcriptional and post-translational levels. Facilitates recruitment of deacetylase HDAC6 to lysosomes to deacetylate CTTN, leading to actin polymerization, promotion of autophagosome-lysosome fusion and completion of autophagy. Promotes secretion of exosomes as well as secretion of SCNA via exosomes. Plays a role in lipid homeostasis. The sequence is that of Polyamine-transporting ATPase 13A2 from Mus musculus (Mouse).